The primary structure comprises 142 residues: Cell wall-binding protein YqgA (142 aa).

A signal peptide spans 1-28 (MKQGKFSVFLILLLMLTLVVAPKEKAEA).

Found in a complex with F(1)F(0) ATP synthase and SpoIIIJ and YqjG.

It localises to the secreted. The protein resides in the cell wall. In Bacillus subtilis (strain 168), this protein is Cell wall-binding protein YqgA (yqgA).